The sequence spans 212 residues: Imidazole glycerol phosphate synthase subunit HisH (212 aa).

One can recognise a Glutamine amidotransferase type-1 domain in the interval 4-210 (NIGIIDYGMG…LKWLHEKNSD (207 aa)). Cys82 serves as the catalytic Nucleophile. Active-site residues include His185 and Glu187.

In terms of assembly, heterodimer of HisH and HisF.

Its subcellular location is the cytoplasm. The enzyme catalyses 5-[(5-phospho-1-deoxy-D-ribulos-1-ylimino)methylamino]-1-(5-phospho-beta-D-ribosyl)imidazole-4-carboxamide + L-glutamine = D-erythro-1-(imidazol-4-yl)glycerol 3-phosphate + 5-amino-1-(5-phospho-beta-D-ribosyl)imidazole-4-carboxamide + L-glutamate + H(+). It catalyses the reaction L-glutamine + H2O = L-glutamate + NH4(+). It participates in amino-acid biosynthesis; L-histidine biosynthesis; L-histidine from 5-phospho-alpha-D-ribose 1-diphosphate: step 5/9. Functionally, IGPS catalyzes the conversion of PRFAR and glutamine to IGP, AICAR and glutamate. The HisH subunit catalyzes the hydrolysis of glutamine to glutamate and ammonia as part of the synthesis of IGP and AICAR. The resulting ammonia molecule is channeled to the active site of HisF. The chain is Imidazole glycerol phosphate synthase subunit HisH from Prochlorococcus marinus (strain MIT 9211).